A 584-amino-acid polypeptide reads, in one-letter code: UvrABC system protein C (584 aa).

Positions 12–89 constitute a GIY-YIG domain; it reads NKPGCYLFLN…IKKYRPKYNV (78 aa). A UVR domain is found at 194–229; sequence NQVKQTLVKQMQKASDNLQFEQAKRIKDQITSLDFI.

The protein belongs to the UvrC family. Interacts with UvrB in an incision complex.

It localises to the cytoplasm. In terms of biological role, the UvrABC repair system catalyzes the recognition and processing of DNA lesions. UvrC both incises the 5' and 3' sides of the lesion. The N-terminal half is responsible for the 3' incision and the C-terminal half is responsible for the 5' incision. The protein is UvrABC system protein C of Mycoplasma capricolum subsp. capricolum (strain California kid / ATCC 27343 / NCTC 10154).